Consider the following 168-residue polypeptide: UPF0304 protein MJECS11 (168 aa).

Belongs to the UPF0304 family.

The chain is UPF0304 protein MJECS11 from Methanocaldococcus jannaschii (strain ATCC 43067 / DSM 2661 / JAL-1 / JCM 10045 / NBRC 100440) (Methanococcus jannaschii).